We begin with the raw amino-acid sequence, 22 residues long: Cysteine proteinase (22 aa).

Positions 1-22 are disordered; it reads GADDSDWRKKGAVNVIXKDQGQ.

It belongs to the peptidase C1 family.

This Trichomonas vaginalis protein is Cysteine proteinase.